The chain runs to 1082 residues: RhoGEF domain-containing protein gxcI (1082 aa).

Residues 1 to 15 are compositionally biased toward polar residues; the sequence is MRKNSTSNPSPSHQF. 5 disordered regions span residues 1 to 29, 59 to 78, 91 to 394, 438 to 488, and 504 to 524; these read MRKN…VNNN, DKNQ…VLPQ, YNEQ…VTSL, KQAS…SVSN, and INSF…SLSL. Low complexity-rich tracts occupy residues 20-29, 62-71, 96-109, 116-160, and 170-184; these read KNTTTVVNNN, QQQQQQQQQQ, PSSS…SSSP, LLST…SGSP, and PTIL…RQLP. Positions 185 to 206 are enriched in pro residues; that stretch reads TRPPSPLPKLPSRPTSPVPPNP. The span at 211 to 244 shows a compositional bias: low complexity; that stretch reads NTTTTNNNNNNNNNNNNNNNNNNNNNNNNNNNNN. Pro residues predominate over residues 262–276; sequence PIPPPNDKPAPPPRP. Over residues 282–366 the composition is skewed to low complexity; the sequence is TLTTPPTIAT…NNNNNSNNNK (85 aa). Residues 367–379 show a composition bias toward pro residues; it reads PLPPTSTKPPRPK. Positions 450-473 are enriched in low complexity; it reads SSLSLSTTPTSVSPSTPSSANPTP. Residues 622-817 form the DH domain; sequence SFNKVIKEII…EKIVNDINGK (196 aa). The tract at residues 838-994 is PH-like; sequence QQLRDQTFLK…NDIDEAINIL (157 aa). Disordered regions lie at residues 920 to 961 and 1017 to 1060; these read NNNN…NSTP and NNNN…NSNN.

Functionally, GTPase-activating protein. This Dictyostelium discoideum (Social amoeba) protein is RhoGEF domain-containing protein gxcI (gxcI).